A 286-amino-acid polypeptide reads, in one-letter code: Nucleotide-binding protein VC_2532 (286 aa).

Position 8–15 (8–15 (GQSGAGKS)) interacts with ATP. 56–59 (DIRN) contacts GTP.

It belongs to the RapZ-like family.

Functionally, displays ATPase and GTPase activities. This is Nucleotide-binding protein VC_2532 from Vibrio cholerae serotype O1 (strain ATCC 39315 / El Tor Inaba N16961).